Consider the following 338-residue polypeptide: Ketol-acid reductoisomerase (NADP(+)) (338 aa).

Residues Met-1–Thr-181 enclose the KARI N-terminal Rossmann domain. NADP(+)-binding positions include Tyr-24–Gln-27, Arg-47, and Ser-52. The active site involves His-107. Gly-133 contacts NADP(+). Positions Asn-182–Ile-327 constitute a KARI C-terminal knotted domain. Residues Asp-190, Glu-194, Glu-226, and Glu-230 each coordinate Mg(2+). Position 251 (Ser-251) interacts with substrate.

This sequence belongs to the ketol-acid reductoisomerase family. Requires Mg(2+) as cofactor.

The enzyme catalyses (2R)-2,3-dihydroxy-3-methylbutanoate + NADP(+) = (2S)-2-acetolactate + NADPH + H(+). It carries out the reaction (2R,3R)-2,3-dihydroxy-3-methylpentanoate + NADP(+) = (S)-2-ethyl-2-hydroxy-3-oxobutanoate + NADPH + H(+). It participates in amino-acid biosynthesis; L-isoleucine biosynthesis; L-isoleucine from 2-oxobutanoate: step 2/4. The protein operates within amino-acid biosynthesis; L-valine biosynthesis; L-valine from pyruvate: step 2/4. In terms of biological role, involved in the biosynthesis of branched-chain amino acids (BCAA). Catalyzes an alkyl-migration followed by a ketol-acid reduction of (S)-2-acetolactate (S2AL) to yield (R)-2,3-dihydroxy-isovalerate. In the isomerase reaction, S2AL is rearranged via a Mg-dependent methyl migration to produce 3-hydroxy-3-methyl-2-ketobutyrate (HMKB). In the reductase reaction, this 2-ketoacid undergoes a metal-dependent reduction by NADPH to yield (R)-2,3-dihydroxy-isovalerate. This chain is Ketol-acid reductoisomerase (NADP(+)), found in Polaromonas naphthalenivorans (strain CJ2).